The following is a 157-amino-acid chain: DNA-binding protein MNB1B (157 aa).

3 disordered regions span residues 1-45 (MKGA…KRAP), 59-87 (FKEKNPKNKSVAAVGKAAGDRWKSLSESD), and 109-157 (YNKG…DDDE). 2 stretches are compositionally biased toward basic and acidic residues: residues 10-27 (AKADAKLAVKSKGAEKPA) and 76-87 (AGDRWKSLSESD). The HMG box DNA-binding region spans 41–110 (PKRAPSAFFV…EYNKAIAAYN (70 aa)). Acidic residues-rich tracts occupy residues 124 to 133 (EEEEEDEEES) and 141 to 157 (NDEDDEEGSEEDEDDDE). At S149 the chain carries Phosphoserine; by CK2.

Expressed in all tissues examined.

The protein localises to the nucleus. Functionally, recognizes an AAGG motif at the MNF1-binding site. This is DNA-binding protein MNB1B (MNB1B) from Zea mays (Maize).